Consider the following 248-residue polypeptide: Putative insertion sequence ATP-binding protein y4uH (248 aa).

106–113 (GPTGIGKS) contributes to the ATP binding site.

The protein belongs to the IS21/IS1162 putative ATP-binding protein family.

This is Putative insertion sequence ATP-binding protein y4uH from Sinorhizobium fredii (strain NBRC 101917 / NGR234).